The following is a 398-amino-acid chain: Trans-2-enoyl-CoA reductase [NADH] (398 aa).

NAD(+) is bound by residues 47–52 (GASSGF), 74–75 (FE), 111–112 (DA), and 139–140 (LA). Tyr225 is a binding site for substrate. The active-site Proton donor is Tyr235. NAD(+)-binding positions include Lys244 and 274–276 (IVT).

The protein belongs to the TER reductase family. In terms of assembly, monomer.

It catalyses the reaction a 2,3-saturated acyl-CoA + NAD(+) = a (2E)-enoyl-CoA + NADH + H(+). Its pathway is lipid metabolism; fatty acid biosynthesis. Involved in the fatty acid synthesis (FAS II). Catalyzes the reduction of a carbon-carbon double bond in an enoyl moiety that is covalently linked to a coenzyme A (CoA). The sequence is that of Trans-2-enoyl-CoA reductase [NADH] from Clostridium beijerinckii (strain ATCC 51743 / NCIMB 8052) (Clostridium acetobutylicum).